A 722-amino-acid chain; its full sequence is Polyribonucleotide nucleotidyltransferase (722 aa).

Mg(2+) contacts are provided by aspartate 487 and aspartate 493. Positions 554–613 constitute a KH domain; that stretch reads PRIETFKIPTDKIREVIGTGGKVIREIVEKTGAKVNIEDDGTVKVASSDGESIKAAIKWI. Residues 623–691 form the S1 motif domain; it reads GEIYEGTVVK…DRGKTRLSMK (69 aa). The segment at 697–722 is disordered; that stretch reads TGEDLEAKQKAEAKAEGEAPAQAAGE. A compositionally biased stretch (basic and acidic residues) spans 701–713; the sequence is LEAKQKAEAKAEG.

The protein belongs to the polyribonucleotide nucleotidyltransferase family. Mg(2+) is required as a cofactor.

It is found in the cytoplasm. It carries out the reaction RNA(n+1) + phosphate = RNA(n) + a ribonucleoside 5'-diphosphate. Functionally, involved in mRNA degradation. Catalyzes the phosphorolysis of single-stranded polyribonucleotides processively in the 3'- to 5'-direction. The sequence is that of Polyribonucleotide nucleotidyltransferase from Rhodopseudomonas palustris (strain TIE-1).